The primary structure comprises 519 residues: C-glycoside 3-oxidase (519 aa).

Position 41 (Glu-41) interacts with FAD. The tract at residues 43–93 is disordered; it reads GPTVSNPPGAHVKNIEDPERRSHAQRASEGPGAGAETVNSPGAVKSGERRA. Residues 55-64 show a composition bias toward basic and acidic residues; it reads KNIEDPERRS. FAD-binding residues include Ser-118, Asn-120, Met-124, Thr-129, Ala-131, and Val-234. His-440 serves as the catalytic Proton acceptor. 2 residues coordinate FAD: Asn-474 and Thr-486.

Belongs to the GMC oxidoreductase family. Monomer. Requires FAD as cofactor.

The enzyme catalyses isovitexin + O2 = 3''-dehydroisovitexin + H2O2. It carries out the reaction isoorientin + O2 = 3''-dehydroisoorientin + H2O2. It catalyses the reaction mangiferin + O2 = 3'-dehydromangiferin + H2O2. In terms of biological role, FAD-dependent C-glycoside-metabolizing enzyme that participates in the degradation of certain C-glycosides by catalyzing the oxidation of the hydroxyl group at the C3 position of the sugar moiety. Shows oxidase activity toward various C-glycosides such as isovitexin, isoorientin and mangiferin but cannot use carminic acid, puerarin, orientin or aloesin. Shows weak activity (100 to 1000-fold lower) with O-glycosides. Probably plays a crucial role in the metabolism of C-glycosides in nature. The chain is C-glycoside 3-oxidase from Arthrobacter globiformis (strain ATCC 8010 / DSM 20124 / JCM 1332 / NBRC 12137 / NCIMB 8907 / NRRL B-2979 / 168).